The chain runs to 1845 residues: Proteasome adapter and scaffold protein ECM29 (1845 aa).

Residue Ala2 is modified to N-acetylalanine. HEAT repeat units follow at residues 28–65, 107–144, 162–205, 326–362, 387–426, 429–466, 469–507, 683–720, 721–759, 783–820, 829–868, 870–907, 931–969, 975–1012, 1013–1050, 1112–1149, 1152–1189, 1194–1231, 1243–1281, 1285–1323, 1348–1386, 1390–1427, 1517–1554, 1558–1595, 1605–1642, 1646–1683, and 1779–1822; these read TDEQLQNIISKFLPPVLLKLSSTQEGVRKKVMELLVHL, YPRLPVEKQCELAPTLLTAMEGKPQPQQDSLMHLLIPT, NLAE…QGSS, RDPVSTRVKLKIVPHLLRSRQAAETFPANIQVVYDGL, PEIKIKPLGPMLLNGLTKLINEYKEDPKLLSMAYSAVGKL, RMPHLFTKDIALVQQLFEALCKEEPETRLAIQEALSMM, AYSTLEGAQRTLMEALVASYLIKPEVQVRQVAVKFASTV, YPEKLATKFVDKTEWIKSLMNNSKEEMRELAALFYSVV, VSTVSGNELKSMIEQLIKTTKDNHSPEIQHGSLLALGFT, TLPDQEELIQSATETIGSFLDSTSPLLAIAACTALGEI, PSEGSGFTKLHLVESLLSRIPSSKETNKMKERAIQTLGYF, VGDGDFPHQKLLLQGLMDSVEAKQIELQFTIGEAITSA, AGAKVNDVVPWVLDVILNKHIISPNPHVRQAACIWLLSL, THKEVKSHLKEIQSAFVSVLSENDELSQDVASKGLGLV, YELGNEQDQQELVSTLVETLMTGKRVKHEVSGETVVFQ, AGEQLAPFLPQLVPRLYRYQFDPNLGIRQAMTSIWNAL, DKSMVDKYLKEILQDLVKNLTSNMWRVRESSCLALNDL, PLDDIIDKLPEIWETLFRVQDDIKESVRKAAELALKTL, KGAAGQRTIAALLPCLLDKGMMSTVTEVRALSINTLVKI, AGAMLKPHAPKLIPALLESLSVLEPQVLNYLSLRATEQE, LQYLDVSVLGELVPRLCELIRSGVGLGTKGGCASVIVSL, CPQDLTPYSGKLMSALLSGLTDRNSVIQKSCAFAMGHL, SFGGIRLYLQELITITQKALQSQSWKMKAQGAIAMASI, TSSLVPPYLGMILTALLQGLAGRTWAGKEELLKAIACV, KSVPNQPSTNEILQAVLKECSKENVKYKIVAISCAADI, TKEDRFQEFSNIVIPLIKKNSLESSGVRTTKNEEENEK, and TYSS…LATM. Positions 193–207 are enriched in low complexity; sequence QSRQNSSSAQGSSSN. The tract at residues 193-217 is disordered; the sequence is QSRQNSSSAQGSSSNSGGGSGIPQP. Ser830 bears the Phosphoserine mark. Residue Thr836 is modified to Phosphothreonine. Lys1039 participates in a covalent cross-link: Glycyl lysine isopeptide (Lys-Gly) (interchain with G-Cter in SUMO1).

It belongs to the ECM29 family. Non-stoichiometric component of the proteasome; associates with the 26S proteasome. Interacts (via N-terminus) with VPS11, VPS26A, VPS36, RAB11FIP4 and RABEP1. Interacts (via C-terminus) with DCTN1, DCTN2, KIF5B, MYH7, MYH10, MYO10 and ARF6.

Its subcellular location is the endoplasmic reticulum. It localises to the endoplasmic reticulum-Golgi intermediate compartment. It is found in the endosome. The protein resides in the cytoplasm. The protein localises to the cytoskeleton. Its subcellular location is the microtubule organizing center. It localises to the centrosome. It is found in the nucleus. The protein resides in the multivesicular body. The protein localises to the cytoplasmic vesicle. Its function is as follows. Adapter/scaffolding protein that binds to the 26S proteasome, motor proteins and other compartment specific proteins. May couple the proteasome to different compartments including endosome, endoplasmic reticulum and centrosome. May play a role in ERAD and other enhanced proteolysis. Promotes proteasome dissociation under oxidative stress. The chain is Proteasome adapter and scaffold protein ECM29 from Homo sapiens (Human).